The chain runs to 802 residues: LPS-assembly protein LptD (802 aa).

A signal peptide spans M1–A29.

It belongs to the LptD family. As to quaternary structure, component of the lipopolysaccharide transport and assembly complex. Interacts with LptE and LptA.

It localises to the cell outer membrane. Functionally, together with LptE, is involved in the assembly of lipopolysaccharide (LPS) at the surface of the outer membrane. This is LPS-assembly protein LptD from Neisseria meningitidis serogroup A / serotype 4A (strain DSM 15465 / Z2491).